The chain runs to 413 residues: Serine--tRNA ligase (413 aa).

Position 221 to 223 (221 to 223 (TAE)) interacts with L-serine. 252–254 (RRE) lines the ATP pocket. An L-serine-binding site is contributed by E275. ATP is bound at residue 339–342 (EVSS). S375 lines the L-serine pocket.

The protein belongs to the class-II aminoacyl-tRNA synthetase family. Type-1 seryl-tRNA synthetase subfamily. As to quaternary structure, homodimer. The tRNA molecule binds across the dimer.

It localises to the cytoplasm. It carries out the reaction tRNA(Ser) + L-serine + ATP = L-seryl-tRNA(Ser) + AMP + diphosphate + H(+). The enzyme catalyses tRNA(Sec) + L-serine + ATP = L-seryl-tRNA(Sec) + AMP + diphosphate + H(+). Its pathway is aminoacyl-tRNA biosynthesis; selenocysteinyl-tRNA(Sec) biosynthesis; L-seryl-tRNA(Sec) from L-serine and tRNA(Sec): step 1/1. Functionally, catalyzes the attachment of serine to tRNA(Ser). Is also able to aminoacylate tRNA(Sec) with serine, to form the misacylated tRNA L-seryl-tRNA(Sec), which will be further converted into selenocysteinyl-tRNA(Sec). The polypeptide is Serine--tRNA ligase (Dehalococcoides mccartyi (strain ATCC BAA-2100 / JCM 16839 / KCTC 5957 / BAV1)).